The chain runs to 144 residues: uncharacterized protein (144 aa).

An N-terminal signal peptide occupies residues Met-1–Tyr-23.

This is an uncharacterized protein from Archaeoglobus fulgidus (strain ATCC 49558 / DSM 4304 / JCM 9628 / NBRC 100126 / VC-16).